A 422-amino-acid chain; its full sequence is MTDIVDELKWRGLFAQSTDEDALRKALADGPVTFYCGFDPTAPSLHVGHLVQVLTVRRLQQAGHRPLALVGGATGQIGDPRPTAERTLNSPETVAGWVERLRGQIEPFLSFEGENAAVMVNNLDWTEGLSAIEFLRDIGKHFRVNKMLTKDSVARRLESSEGISYTEFSYQLLQAMDFLQLYRRYGCTMQQGGSDQWGNLTAGLDLLHRLEPDASVHAYATPLMTKADGTKFGKTEGGAVWLDPEMTTPYAFYQFWLNVDDRDISTYMRILSFRSRAELEELERQTEERPQARAAQRALAEELTTLVHGAGQTAAVIAASKALFGQGELAELDEATLAAALSELPHVRVAEPAPVVDLFAEVGLVASKSAARRTVKEGGAYVNNAKVTGEDAVPAKEDLLHGRWLVLRRGKKNLAAVEITGA.

L-tyrosine is bound at residue Tyr-35. The 'HIGH' region signature appears at 40–49 (PTAPSLHVGH). L-tyrosine is bound by residues Tyr-170 and Gln-174. The 'KMSKS' region motif lies at 231 to 235 (KFGKT). Lys-234 serves as a coordination point for ATP. One can recognise an S4 RNA-binding domain in the interval 353 to 419 (APVVDLFAEV…GKKNLAAVEI (67 aa)).

Belongs to the class-I aminoacyl-tRNA synthetase family. TyrS type 1 subfamily. As to quaternary structure, homodimer.

It localises to the cytoplasm. It catalyses the reaction tRNA(Tyr) + L-tyrosine + ATP = L-tyrosyl-tRNA(Tyr) + AMP + diphosphate + H(+). Its function is as follows. Catalyzes the attachment of tyrosine to tRNA(Tyr) in a two-step reaction: tyrosine is first activated by ATP to form Tyr-AMP and then transferred to the acceptor end of tRNA(Tyr). The chain is Tyrosine--tRNA ligase from Streptomyces coelicolor (strain ATCC BAA-471 / A3(2) / M145).